The sequence spans 268 residues: Tryptophan synthase alpha chain (268 aa).

Catalysis depends on proton acceptor residues Glu-49 and Asp-60.

This sequence belongs to the TrpA family. Tetramer of two alpha and two beta chains.

It carries out the reaction (1S,2R)-1-C-(indol-3-yl)glycerol 3-phosphate + L-serine = D-glyceraldehyde 3-phosphate + L-tryptophan + H2O. It functions in the pathway amino-acid biosynthesis; L-tryptophan biosynthesis; L-tryptophan from chorismate: step 5/5. The alpha subunit is responsible for the aldol cleavage of indoleglycerol phosphate to indole and glyceraldehyde 3-phosphate. The polypeptide is Tryptophan synthase alpha chain (Escherichia coli (strain SE11)).